The sequence spans 335 residues: Protein-arginine kinase (335 aa).

Residues 21–244 enclose the Phosphagen kinase C-terminal domain; it reads IVMSSRIRLA…NQIIHDEKQI (224 aa). ATP is bound by residues 24-28, histidine 82, arginine 115, 166-170, and 197-202; these read SSRIR, RASVM, and RGIYGE.

This sequence belongs to the ATP:guanido phosphotransferase family.

It carries out the reaction L-arginyl-[protein] + ATP = N(omega)-phospho-L-arginyl-[protein] + ADP + H(+). Functionally, catalyzes the specific phosphorylation of arginine residues in proteins. This is Protein-arginine kinase from Staphylococcus aureus (strain Mu3 / ATCC 700698).